The following is a 332-amino-acid chain: Phosphate acyltransferase (332 aa).

Belongs to the PlsX family. Homodimer. Probably interacts with PlsY.

The protein localises to the cytoplasm. It carries out the reaction a fatty acyl-[ACP] + phosphate = an acyl phosphate + holo-[ACP]. It participates in lipid metabolism; phospholipid metabolism. Its function is as follows. Catalyzes the reversible formation of acyl-phosphate (acyl-PO(4)) from acyl-[acyl-carrier-protein] (acyl-ACP). This enzyme utilizes acyl-ACP as fatty acyl donor, but not acyl-CoA. In Clostridium novyi (strain NT), this protein is Phosphate acyltransferase.